Consider the following 557-residue polypeptide: Dihydroxy-acid dehydratase (557 aa).

A [2Fe-2S] cluster-binding site is contributed by Cys-50. Asp-82 lines the Mg(2+) pocket. Residue Cys-123 coordinates [2Fe-2S] cluster. Asp-124 and Lys-125 together coordinate Mg(2+). Position 125 is an N6-carboxylysine (Lys-125). Residue Cys-195 coordinates [2Fe-2S] cluster. Residue Glu-447 participates in Mg(2+) binding. Ser-473 functions as the Proton acceptor in the catalytic mechanism.

This sequence belongs to the IlvD/Edd family. Homodimer. The cofactor is [2Fe-2S] cluster. Mg(2+) serves as cofactor.

The enzyme catalyses (2R)-2,3-dihydroxy-3-methylbutanoate = 3-methyl-2-oxobutanoate + H2O. The catalysed reaction is (2R,3R)-2,3-dihydroxy-3-methylpentanoate = (S)-3-methyl-2-oxopentanoate + H2O. The protein operates within amino-acid biosynthesis; L-isoleucine biosynthesis; L-isoleucine from 2-oxobutanoate: step 3/4. It participates in amino-acid biosynthesis; L-valine biosynthesis; L-valine from pyruvate: step 3/4. Functionally, functions in the biosynthesis of branched-chain amino acids. Catalyzes the dehydration of (2R,3R)-2,3-dihydroxy-3-methylpentanoate (2,3-dihydroxy-3-methylvalerate) into 2-oxo-3-methylpentanoate (2-oxo-3-methylvalerate) and of (2R)-2,3-dihydroxy-3-methylbutanoate (2,3-dihydroxyisovalerate) into 2-oxo-3-methylbutanoate (2-oxoisovalerate), the penultimate precursor to L-isoleucine and L-valine, respectively. The polypeptide is Dihydroxy-acid dehydratase (Burkholderia mallei (strain NCTC 10247)).